A 145-amino-acid polypeptide reads, in one-letter code: MRLNTLSPAAGSKPEKQRRGRGIGSGLGKTGGRGVKGQTSRSGGGKVRAGFEGGQMPLKIRLPKFGFFSRKSLVSAEVRLNEIAMVEGDVVDLSTLKQAGVVTKNIVFAKVVLSGNIDRAVTVRGVSVTKGARAAIEAAGGKIEE.

A disordered region spans residues 1–50 (MRLNTLSPAAGSKPEKQRRGRGIGSGLGKTGGRGVKGQTSRSGGGKVRAG). Positions 22–35 (GIGSGLGKTGGRGV) are enriched in gly residues.

The protein belongs to the universal ribosomal protein uL15 family. Part of the 50S ribosomal subunit.

Binds to the 23S rRNA. This is Large ribosomal subunit protein uL15 from Aeromonas salmonicida (strain A449).